Consider the following 638-residue polypeptide: Methylmalonyl-CoA mutase small subunit (638 aa).

The segment covering 1 to 11 (MSSTDQGTNPA) has biased composition (polar residues). The interval 1–34 (MSSTDQGTNPADTDDLTPTTLSLAGDFPKATEEQ) is disordered.

Belongs to the methylmalonyl-CoA mutase family. In terms of assembly, heterodimer of an alpha and a beta chain. Adenosylcob(III)alamin is required as a cofactor.

The enzyme catalyses (R)-methylmalonyl-CoA = succinyl-CoA. It participates in metabolic intermediate metabolism; propanoyl-CoA degradation; succinyl-CoA from propanoyl-CoA: step 3/3. Catalyzes the isomerization of succinyl-CoA to methylmalonyl-CoA during synthesis of propionate from tricarboxylic acid-cycle intermediates. In Propionibacterium freudenreichii subsp. shermanii, this protein is Methylmalonyl-CoA mutase small subunit (mutA).